Consider the following 636-residue polypeptide: MKLCTSQQFGVAVLFIVLNICSPLADASPIAWDFAVTLRDKILFVDNRWRTIGSAAHEFEELSALAFDEAEELIYFNDQQHQNGSIFSLRRDATVASHIVEQAVQRTGNDSVSGLAYDPLNRNLFWADMRQSKIYFASIDTLYTEPPKVLVDLSAEGGRPDGVAVDICRRQLYWTNCKINHATVERIGLNGTGRETIIKQDIDMPRGIVIDQLSDRIFWIDDKVGIFFALESARLDGSDRQLVLKDKHQSPIQLAITEDTIYWTDKADKAVWSYPKPAYNKPATNSSETQPQPTKLASWKDDVYGIVARTGFYQHLQKDAHCASVVRKVKQRLDNKLNNRTHERSAVEERMDALEREHCLNGASYMSRGNFCICPVGYKGARCEISECHNFCVHGTCEISDMGYPKCYCQEDFYGERCEYYKCNGHCLNDGHCLVDKESGELSCDCRENFTGTRCEHNETAHCASYCQHLKQHPDAFVPASCVDICEELHLSNGTIVTEYQAAAPLCADGPSSLRSGSVIIVLVVGIVSSLALVAVIVHGLRLIYKPKRPRIKKTFVVRKQARLNSASDTPLTNRPLATEQCEITIENCCNMNICETPCFDPKLVEQQFAARDRKSPCVKEDKKILIHNMEDDLLT.

Residues 1-27 (MKLCTSQQFGVAVLFIVLNICSPLADA) form the signal peptide. The Extracellular segment spans residues 28–517 (SPIAWDFAVT…ADGPSSLRSG (490 aa)). N-linked (GlcNAc...) asparagine glycans are attached at residues Asn83 and Asn109. LDL-receptor class B repeat units follow at residues 122–169 (RNLF…DICR), 170–214 (RQLY…DQLS), and 215–260 (DRIF…TEDT). N-linked (GlcNAc...) asparagine glycosylation occurs at Asn190. Residues Asn285 and Asn339 are each glycosylated (N-linked (GlcNAc...) asparagine). EGF-like domains follow at residues 350-384 (RMDA…ARCE) and 419-456 (EYYK…TRCE). Disulfide bonds link Cys359–Cys372, Cys374–Cys383, Cys423–Cys433, Cys427–Cys444, and Cys446–Cys455. Asn449, Asn458, and Asn493 each carry an N-linked (GlcNAc...) asparagine glycan. Residues 518-538 (SVIIVLVVGIVSSLALVAVIV) form a helical membrane-spanning segment. The Cytoplasmic portion of the chain corresponds to 539-636 (HGLRLIYKPK…IHNMEDDLLT (98 aa)).

Belongs to the cueball family.

It localises to the cell membrane. Functionally, has a role in spermatogenesis and oogenesis. In Drosophila virilis (Fruit fly), this protein is Protein cueball.